A 294-amino-acid polypeptide reads, in one-letter code: 4-hydroxy-tetrahydrodipicolinate synthase (294 aa).

Thr45 is a pyruvate binding site. Catalysis depends on Tyr133, which acts as the Proton donor/acceptor. Catalysis depends on Lys161, which acts as the Schiff-base intermediate with substrate. Ile203 is a pyruvate binding site.

Belongs to the DapA family. In terms of assembly, homotetramer; dimer of dimers.

It localises to the cytoplasm. It carries out the reaction L-aspartate 4-semialdehyde + pyruvate = (2S,4S)-4-hydroxy-2,3,4,5-tetrahydrodipicolinate + H2O + H(+). It functions in the pathway amino-acid biosynthesis; L-lysine biosynthesis via DAP pathway; (S)-tetrahydrodipicolinate from L-aspartate: step 3/4. Its function is as follows. Catalyzes the condensation of (S)-aspartate-beta-semialdehyde [(S)-ASA] and pyruvate to 4-hydroxy-tetrahydrodipicolinate (HTPA). The sequence is that of 4-hydroxy-tetrahydrodipicolinate synthase from Shewanella pealeana (strain ATCC 700345 / ANG-SQ1).